Reading from the N-terminus, the 355-residue chain is uncharacterized protein (355 aa).

Residues Leu-6–Ala-26 form a helical membrane-spanning segment.

It belongs to the SUN family.

The protein localises to the membrane. This is an uncharacterized protein from Saccharomyces cerevisiae (strain ATCC 204508 / S288c) (Baker's yeast).